A 714-amino-acid chain; its full sequence is Kinesin-like protein KIN-13 (714 aa).

In terms of domain architecture, SAM spans 1-63 (MSDLVYQWLE…FRLITTLKSR (63 aa)). Polar residues predominate over residues 69–81 (QQPSAPNTGATPQ). 2 disordered regions span residues 69-109 (QQPS…NDIQ) and 122-161 (GGYEPPYVSAQGSGPANGDDYVIPTIPYHPNAPNPPNPRG). Low complexity predominate over residues 82 to 92 (SVPSSHVSPHV). Residues 151-160 (PNAPNPPNPR) show a composition bias toward pro residues. Positions 183 to 515 (RIRVVIRKRP…LRYADRVKEL (333 aa)) constitute a Kinesin motor domain. 273 to 280 (GQTGSGKS) lines the ATP pocket.

It belongs to the TRAFAC class myosin-kinesin ATPase superfamily. Kinesin family. KIN-13 subfamily. As to quaternary structure, interacts with PLK. In terms of processing, phosphorylated by PLK.

It is found in the cytoplasm. The protein resides in the cytoskeleton. The protein localises to the cell projection. Its subcellular location is the cilium. It localises to the flagellum. It is found in the flagellum basal body. The protein resides in the flagellum axoneme. The protein localises to the spindle. Its subcellular location is the chromosome. It localises to the centromere. It is found in the kinetochore. Functionally, involved in cell cycle. Involved in formation of flagella, regulation of flagellar length, and formation of median bodies during interphase. Regulates flagellar length in all eight distal flagellar tips by promoting disassembly of the microtubules. Disassembles microtubules at the distal flagellar tips in a length-dependent manner in order to maintain different equilibrium lengths of the four flagellar pairs. Regulates interphase and mitotic microtubule dynamics. Regulates microtubule disassembly dynamics of the dual mitotic spindles and the median body. The polypeptide is Kinesin-like protein KIN-13 (Giardia intestinalis (strain ATCC 50803 / WB clone C6) (Giardia lamblia)).